The following is a 343-amino-acid chain: Probable dual-specificity RNA methyltransferase RlmN (343 aa).

Glutamate 91 functions as the Proton acceptor in the catalytic mechanism. Residues 97–326 form the Radical SAM core domain; it reads HPDRITACIS…AEIRREKGAD (230 aa). Cysteines 104 and 331 form a disulfide. Residues cysteine 111, cysteine 115, and cysteine 118 each contribute to the [4Fe-4S] cluster site. S-adenosyl-L-methionine is bound by residues 158 to 159, serine 190, 213 to 215, and asparagine 289; these read GE and SLH. The active-site S-methylcysteine intermediate is cysteine 331.

It belongs to the radical SAM superfamily. RlmN family. [4Fe-4S] cluster serves as cofactor.

The protein localises to the cytoplasm. It catalyses the reaction adenosine(2503) in 23S rRNA + 2 reduced [2Fe-2S]-[ferredoxin] + 2 S-adenosyl-L-methionine = 2-methyladenosine(2503) in 23S rRNA + 5'-deoxyadenosine + L-methionine + 2 oxidized [2Fe-2S]-[ferredoxin] + S-adenosyl-L-homocysteine. The enzyme catalyses adenosine(37) in tRNA + 2 reduced [2Fe-2S]-[ferredoxin] + 2 S-adenosyl-L-methionine = 2-methyladenosine(37) in tRNA + 5'-deoxyadenosine + L-methionine + 2 oxidized [2Fe-2S]-[ferredoxin] + S-adenosyl-L-homocysteine. Functionally, specifically methylates position 2 of adenine 2503 in 23S rRNA and position 2 of adenine 37 in tRNAs. The protein is Probable dual-specificity RNA methyltransferase RlmN of Thermotoga petrophila (strain ATCC BAA-488 / DSM 13995 / JCM 10881 / RKU-1).